Here is a 199-residue protein sequence, read N- to C-terminus: MNKFIVFEGIDGCGKTTQAKLIAEKLNAKFTFEPTDGKIGKSIREILSGSKCQKETLALLFAADRVEHVSKIEEDLKKSHVVSDRYVYSSIVYQMSQGIPKDFIYTINDYAKTPDLVVLLDVDLNEALKRMESREKEIFEKIEIQKKIKEGYYSLINSENEKFMPKYGFIIIDTTSKSITQVFDEILNAIIDKIPDIIQ.

An ATP-binding site is contributed by 9–16 (GIDGCGKT).

It belongs to the thymidylate kinase family.

It catalyses the reaction dTMP + ATP = dTDP + ADP. This chain is Probable thymidylate kinase, found in Methanococcus maripaludis (strain C7 / ATCC BAA-1331).